The primary structure comprises 254 residues: uncharacterized protein (254 aa).

This sequence belongs to the methyltransferase superfamily.

This is an uncharacterized protein from Mycobacterium tuberculosis (strain ATCC 25177 / H37Ra).